The chain runs to 483 residues: tRNA sulfurtransferase (483 aa).

One can recognise a THUMP domain in the interval 62-166 (PQICDALTRV…QDKLTLIKAR (105 aa)). Residues 184-185 (LI), lysine 266, glycine 288, and glutamine 297 contribute to the ATP site. A disulfide bridge connects residues cysteine 345 and cysteine 457. The Rhodanese domain occupies 405 to 483 (LADTDVLLDI…GYTNVKVYRP (79 aa)). Cysteine 457 (cysteine persulfide intermediate) is an active-site residue.

It belongs to the ThiI family.

It is found in the cytoplasm. It carries out the reaction [ThiI sulfur-carrier protein]-S-sulfanyl-L-cysteine + a uridine in tRNA + 2 reduced [2Fe-2S]-[ferredoxin] + ATP + H(+) = [ThiI sulfur-carrier protein]-L-cysteine + a 4-thiouridine in tRNA + 2 oxidized [2Fe-2S]-[ferredoxin] + AMP + diphosphate. The enzyme catalyses [ThiS sulfur-carrier protein]-C-terminal Gly-Gly-AMP + S-sulfanyl-L-cysteinyl-[cysteine desulfurase] + AH2 = [ThiS sulfur-carrier protein]-C-terminal-Gly-aminoethanethioate + L-cysteinyl-[cysteine desulfurase] + A + AMP + 2 H(+). It participates in cofactor biosynthesis; thiamine diphosphate biosynthesis. In terms of biological role, catalyzes the ATP-dependent transfer of a sulfur to tRNA to produce 4-thiouridine in position 8 of tRNAs, which functions as a near-UV photosensor. Also catalyzes the transfer of sulfur to the sulfur carrier protein ThiS, forming ThiS-thiocarboxylate. This is a step in the synthesis of thiazole, in the thiamine biosynthesis pathway. The sulfur is donated as persulfide by IscS. The chain is tRNA sulfurtransferase from Yersinia enterocolitica serotype O:8 / biotype 1B (strain NCTC 13174 / 8081).